Reading from the N-terminus, the 247-residue chain is MSKLFWAMLAFISRLPVPSRWSQGLDFEQYSRGIVMFPFIGLILGGISGLIFILLQSWCGIPLAALFCILALALLTGGFHLDGLADTCDGIFSARRRERMLEIMRDSRLGTHGGLALIFVLLAKILVVSELALRGTPMLAALAVACAAGHGSAVLLMYRHRYAREEGLGNVFIGKVSGRQTCITLGLAVIVATVLLPGMQGLATMVVTLAAIFILGQLLKRTLGGQTGDTLGAAIELGELIFLLALL.

The next 6 membrane-spanning stretches (helical) occupy residues 34–54 (IVMF…IFIL), 59–79 (CGIP…TGGF), 113–133 (GGLA…ELAL), 138–158 (MLAA…LLMY), 171–191 (VFIG…AVIV), and 194–214 (VLLP…AIFI).

This sequence belongs to the CobS family. It depends on Mg(2+) as a cofactor.

The protein localises to the cell inner membrane. The enzyme catalyses alpha-ribazole + adenosylcob(III)inamide-GDP = adenosylcob(III)alamin + GMP + H(+). It carries out the reaction alpha-ribazole 5'-phosphate + adenosylcob(III)inamide-GDP = adenosylcob(III)alamin 5'-phosphate + GMP + H(+). It functions in the pathway cofactor biosynthesis; adenosylcobalamin biosynthesis; adenosylcobalamin from cob(II)yrinate a,c-diamide: step 7/7. Functionally, joins adenosylcobinamide-GDP and alpha-ribazole to generate adenosylcobalamin (Ado-cobalamin). Also synthesizes adenosylcobalamin 5'-phosphate from adenosylcobinamide-GDP and alpha-ribazole 5'-phosphate. This is Adenosylcobinamide-GDP ribazoletransferase from Salmonella paratyphi A (strain ATCC 9150 / SARB42).